The following is a 191-amino-acid chain: Large ribosomal subunit protein uL6 (191 aa).

This sequence belongs to the universal ribosomal protein uL6 family. As to quaternary structure, part of the 50S ribosomal subunit.

This protein binds to the 23S rRNA, and is important in its secondary structure. It is located near the subunit interface in the base of the L7/L12 stalk, and near the tRNA binding site of the peptidyltransferase center. The protein is Large ribosomal subunit protein uL6 of Gloeobacter violaceus (strain ATCC 29082 / PCC 7421).